We begin with the raw amino-acid sequence, 125 residues long: Ribosome-binding factor A (125 aa).

The protein belongs to the RbfA family. As to quaternary structure, monomer. Binds 30S ribosomal subunits, but not 50S ribosomal subunits or 70S ribosomes.

It is found in the cytoplasm. In terms of biological role, one of several proteins that assist in the late maturation steps of the functional core of the 30S ribosomal subunit. Associates with free 30S ribosomal subunits (but not with 30S subunits that are part of 70S ribosomes or polysomes). Required for efficient processing of 16S rRNA. May interact with the 5'-terminal helix region of 16S rRNA. The protein is Ribosome-binding factor A of Xylella fastidiosa (strain M12).